Here is a 232-residue protein sequence, read N- to C-terminus: RNA chaperone ProQ (232 aa).

A disordered region spans residues 105–182; the sequence is EAKARVQAQR…REEQHTPVSD (78 aa). Basic and acidic residues predominate over residues 117–136; sequence QQAKKREAAAAAGEKEDAPR. Positions 137 to 146 are enriched in basic residues; it reads RERKPRPTTP. The span at 147 to 177 shows a compositional bias: basic and acidic residues; the sequence is RRKEGAERKPRAQKPVEKAPKTVKAPREEQH.

It belongs to the ProQ family.

It is found in the cytoplasm. RNA chaperone with significant RNA binding, RNA strand exchange and RNA duplexing activities. May regulate ProP activity through an RNA-based, post-transcriptional mechanism. The protein is RNA chaperone ProQ of Escherichia coli (strain ATCC 8739 / DSM 1576 / NBRC 3972 / NCIMB 8545 / WDCM 00012 / Crooks).